A 251-amino-acid chain; its full sequence is Capsid protein (251 aa).

A disordered region spans residues Met1 to Ala27. The Bipartite nuclear localization signal motif lies at Lys3–Asn20. Residues Pro12–Tyr23 are compositionally biased toward polar residues. The short motif at Lys35–Arg49 is the Nuclear localization signal element. A zinc finger lies at Cys63–His80. Residues Ile96 to Met117 carry the Nuclear export signal motif. Positions Lys195 to Arg242 match the Bipartite nuclear localization signal motif.

This sequence belongs to the geminiviridae capsid protein family. In terms of assembly, homomultimer. Binds to single-stranded and double-stranded viral DNA. Interacts (via nuclear localization signals) with host importin alpha-1a.

It localises to the virion. It is found in the host nucleus. In terms of biological role, encapsidates the viral DNA into characteristic twinned ('geminate') particles. Binds the genomic viral ssDNA and shuttles it into and out of the cell nucleus. The CP of bipartite geminiviruses is not required for cell-to-cell or systemic movement. This Abutilon (Upland cotton) protein is Capsid protein.